The following is a 95-amino-acid chain: UPF0473 protein PEPE_1260 (95 aa).

Belongs to the UPF0473 family.

This Pediococcus pentosaceus (strain ATCC 25745 / CCUG 21536 / LMG 10740 / 183-1w) protein is UPF0473 protein PEPE_1260.